We begin with the raw amino-acid sequence, 176 residues long: RNA pyrophosphohydrolase (176 aa).

Residues 6–149 form the Nudix hydrolase domain; that stretch reads GYRPNVGIVI…KRDVYRRVMK (144 aa). The short motif at 38–59 is the Nudix box element; that stretch reads GGINPGESAEQAMYRELFEEVG.

Belongs to the Nudix hydrolase family. RppH subfamily. A divalent metal cation serves as cofactor.

Its function is as follows. Accelerates the degradation of transcripts by removing pyrophosphate from the 5'-end of triphosphorylated RNA, leading to a more labile monophosphorylated state that can stimulate subsequent ribonuclease cleavage. The sequence is that of RNA pyrophosphohydrolase from Klebsiella pneumoniae (strain 342).